A 113-amino-acid polypeptide reads, in one-letter code: Hydrogenase maturation factor HypA (113 aa).

Histidine 2 lines the Ni(2+) pocket. Positions 73, 76, 89, and 92 each coordinate Zn(2+).

This sequence belongs to the HypA/HybF family.

In terms of biological role, involved in the maturation of [NiFe] hydrogenases. Required for nickel insertion into the metal center of the hydrogenase. This chain is Hydrogenase maturation factor HypA, found in Chlorobaculum tepidum (strain ATCC 49652 / DSM 12025 / NBRC 103806 / TLS) (Chlorobium tepidum).